The following is a 151-amino-acid chain: UPF0756 membrane protein lhv_0995 (151 aa).

5 helical membrane passes run 4–24, 25–45, 52–72, 78–98, and 115–135; these read WLFLALVLVVALVGKNMSLII, ATGVVMALKLIPFASKWLPVI, WGVTVISVAILIPVATGQIGF, TFKSPAGWIAILAGIAVAILS, and LVLGTIIGVVVFKGVAAGPVI.

It belongs to the UPF0756 family.

The protein resides in the cell membrane. The protein is UPF0756 membrane protein lhv_0995 of Lactobacillus helveticus (strain DPC 4571).